The primary structure comprises 75 residues: Conotoxin Leo-O3 (75 aa).

Residues 1-22 (MKLTCVVIVAVLFLTACQLATA) form the signal peptide. A propeptide spanning residues 23-42 (DISGGMRKHRALRSTTKLSR) is cleaved from the precursor. Cystine bridges form between Cys47–Cys60, Cys54–Cys63, and Cys59–Cys69. Cys69 carries the cysteine amide modification. Positions 70 to 75 (GSGLHV) are excised as a propeptide.

This sequence belongs to the conotoxin O1 superfamily. In terms of tissue distribution, expressed by the venom duct.

It is found in the secreted. The protein is Conotoxin Leo-O3 of Conus leopardus (Leopard cone).